The sequence spans 475 residues: Aspartyl/glutamyl-tRNA(Asn/Gln) amidotransferase subunit B (475 aa).

It belongs to the GatB/GatE family. GatB subfamily. In terms of assembly, heterotrimer of A, B and C subunits.

The enzyme catalyses L-glutamyl-tRNA(Gln) + L-glutamine + ATP + H2O = L-glutaminyl-tRNA(Gln) + L-glutamate + ADP + phosphate + H(+). It carries out the reaction L-aspartyl-tRNA(Asn) + L-glutamine + ATP + H2O = L-asparaginyl-tRNA(Asn) + L-glutamate + ADP + phosphate + 2 H(+). In terms of biological role, allows the formation of correctly charged Asn-tRNA(Asn) or Gln-tRNA(Gln) through the transamidation of misacylated Asp-tRNA(Asn) or Glu-tRNA(Gln) in organisms which lack either or both of asparaginyl-tRNA or glutaminyl-tRNA synthetases. The reaction takes place in the presence of glutamine and ATP through an activated phospho-Asp-tRNA(Asn) or phospho-Glu-tRNA(Gln). This is Aspartyl/glutamyl-tRNA(Asn/Gln) amidotransferase subunit B from Chlorobium phaeobacteroides (strain DSM 266 / SMG 266 / 2430).